The primary structure comprises 349 residues: MTEYPHIPVMLEESIQGLGVIPGGRYVDCTLGAGGHSEAILEHSYPGGQLLSIDADPKAIALAAERLKCFGSSVLLVNDNFANLKDICQRYEYMPVHGILFDLGLSSMQLDREESGFSFQTEAPLDMRFSPGQELSAADIVNTYDLAGLSDLIWKYGEEPFSRRIARAILEKRPFKTTTELASVIEKAVGGRHGRIHPATRTFQALRIAVNEELSHLESALAQAQSLLGHGGRLVVISYHSLEDRIVKQYFQKEAKGCICPDDIPQCVCNHKPSLRLINRRVITPSDEEISRNPRSRSAKMRVAERIIQPGEGRFFHSRAKGLVNHVSETGSVRYGQAKHKGVVQRGGS.

S-adenosyl-L-methionine contacts are provided by residues 34–36 (GGH), D54, F81, D102, and Q109.

Belongs to the methyltransferase superfamily. RsmH family.

It localises to the cytoplasm. The enzyme catalyses cytidine(1402) in 16S rRNA + S-adenosyl-L-methionine = N(4)-methylcytidine(1402) in 16S rRNA + S-adenosyl-L-homocysteine + H(+). Specifically methylates the N4 position of cytidine in position 1402 (C1402) of 16S rRNA. The chain is Ribosomal RNA small subunit methyltransferase H from Dehalococcoides mccartyi (strain ATCC BAA-2266 / KCTC 15142 / 195) (Dehalococcoides ethenogenes (strain 195)).